Here is a 294-residue protein sequence, read N- to C-terminus: 1D-myo-inositol 2-acetamido-2-deoxy-alpha-D-glucopyranoside deacetylase (294 aa).

Positions 14, 17, and 149 each coordinate Zn(2+).

It belongs to the MshB deacetylase family. The cofactor is Zn(2+).

The enzyme catalyses 1D-myo-inositol 2-acetamido-2-deoxy-alpha-D-glucopyranoside + H2O = 1D-myo-inositol 2-amino-2-deoxy-alpha-D-glucopyranoside + acetate. Functionally, catalyzes the deacetylation of 1D-myo-inositol 2-acetamido-2-deoxy-alpha-D-glucopyranoside (GlcNAc-Ins) in the mycothiol biosynthesis pathway. The chain is 1D-myo-inositol 2-acetamido-2-deoxy-alpha-D-glucopyranoside deacetylase from Rhodococcus erythropolis (strain PR4 / NBRC 100887).